Here is a 371-residue protein sequence, read N- to C-terminus: uncharacterized protein (371 aa).

The helical transmembrane segment at 17-33 (FLLFSVVLIIVMTTLVF) threads the bilayer.

It to S.pombe SpBC4C3.08 and SpBC4C3.09.

It localises to the membrane. This is an uncharacterized protein from Schizosaccharomyces pombe (strain 972 / ATCC 24843) (Fission yeast).